The following is a 320-amino-acid chain: Lipoyl synthase (320 aa).

[4Fe-4S] cluster contacts are provided by C66, C71, C77, C92, C96, C99, and S306. Residues 77 to 295 (CFGHGTATFM…AEIGYAMGFS (219 aa)) form the Radical SAM core domain.

This sequence belongs to the radical SAM superfamily. Lipoyl synthase family. Requires [4Fe-4S] cluster as cofactor.

The protein localises to the cytoplasm. It catalyses the reaction [[Fe-S] cluster scaffold protein carrying a second [4Fe-4S](2+) cluster] + N(6)-octanoyl-L-lysyl-[protein] + 2 oxidized [2Fe-2S]-[ferredoxin] + 2 S-adenosyl-L-methionine + 4 H(+) = [[Fe-S] cluster scaffold protein] + N(6)-[(R)-dihydrolipoyl]-L-lysyl-[protein] + 4 Fe(3+) + 2 hydrogen sulfide + 2 5'-deoxyadenosine + 2 L-methionine + 2 reduced [2Fe-2S]-[ferredoxin]. Its pathway is protein modification; protein lipoylation via endogenous pathway; protein N(6)-(lipoyl)lysine from octanoyl-[acyl-carrier-protein]: step 2/2. Its function is as follows. Catalyzes the radical-mediated insertion of two sulfur atoms into the C-6 and C-8 positions of the octanoyl moiety bound to the lipoyl domains of lipoate-dependent enzymes, thereby converting the octanoylated domains into lipoylated derivatives. The protein is Lipoyl synthase of Thioalkalivibrio sulfidiphilus (strain HL-EbGR7).